The primary structure comprises 141 residues: Lutropin subunit beta (141 aa).

The N-terminal stretch at 1–20 (MEMLQGLLLLLLLSMGGAWA) is a signal peptide. Cystine bridges form between Cys-29–Cys-77, Cys-43–Cys-92, Cys-46–Cys-130, Cys-54–Cys-108, Cys-58–Cys-110, and Cys-113–Cys-120. N-linked (GlcNAc...) asparagine glycans are attached at residues Asn-33 and Asn-50.

It belongs to the glycoprotein hormones subunit beta family. As to quaternary structure, heterodimer of a common alpha chain and a unique beta chain which confers biological specificity to thyrotropin, lutropin, follitropin and gonadotropin.

It is found in the secreted. Its function is as follows. Promotes spermatogenesis and ovulation by stimulating the testes and ovaries to synthesize steroids. The sequence is that of Lutropin subunit beta (LHB) from Gorilla gorilla gorilla (Western lowland gorilla).